We begin with the raw amino-acid sequence, 82 residues long: Small ribosomal subunit protein bS16 (82 aa).

Belongs to the bacterial ribosomal protein bS16 family.

The protein is Small ribosomal subunit protein bS16 of Gloeothece citriformis (strain PCC 7424) (Cyanothece sp. (strain PCC 7424)).